The primary structure comprises 391 residues: UPF0229 protein BAA_0633 (391 aa).

The span at 1-16 (MGEENQPNYTISQENW) shows a compositional bias: polar residues. 2 disordered regions span residues 1–31 (MGEE…RHQE) and 80–117 (HVGQ…GDAA). Positions 21-31 (KGYDDQQRHQE) are enriched in basic and acidic residues. The span at 98–115 (GSGGQKQKGPGKGQGAGD) shows a compositional bias: gly residues.

The protein belongs to the UPF0229 family.

The polypeptide is UPF0229 protein BAA_0633 (Bacillus anthracis (strain A0248)).